The chain runs to 86 residues: Anti-adapter protein IraP (86 aa).

The stretch at 1 to 38 (MKNLIAELLVKLAQKEEEAKELTVQVEALEIVVTALLR) forms a coiled coil.

Belongs to the IraP family. In terms of assembly, interacts with RssB.

It is found in the cytoplasm. Functionally, inhibits RpoS proteolysis by regulating RssB activity, thereby increasing the stability of the sigma stress factor RpoS especially during phosphate starvation, but also in stationary phase and during nitrogen starvation. Its effect on RpoS stability is due to its interaction with RssB, which probably blocks the interaction of RssB with RpoS, and the consequent delivery of the RssB-RpoS complex to the ClpXP protein degradation pathway. The protein is Anti-adapter protein IraP of Klebsiella pneumoniae (strain 342).